The sequence spans 433 residues: MTASPLAQTPNDMFNAPIAEADPEIAEILDAELSRQQNGLEMIASENFVPRAVLQAQGSVLTNKYAEGYPGRRYYGGCEQVDKIETIARERAKSLFGAEYANVQPHSGAQANAAVYQALVKPGDTVLGLALDHGGHLTHGMKINFSGRFYHAEAYGVNPETFRIDPEIIRQRALETHPAMIIGGWSAYPRIEDFKAMKEIADEVGAKFWVDMAHFAGLVAAGLHPSPVPYADVVSSTAHKTLGGPRSGFILAKQEYAKKLNSAVFPGQQGGPLMHVIAGKAVAFKVAATPEFKDRMQRTLDGAKILAERLMADDVKNNGISVLTGGTDVHLVMVDLRNSEMDGKQGEDLLAQCGITINRNTVPFDPRPASVASGLRIGTSALATRGFGPKEYEEVADIIGTALAAGQDVDALKARVDKLAEDFPLYPGLDQIH.

Residues L131 and 135 to 137 each bind (6S)-5,6,7,8-tetrahydrofolate; that span reads GHL. K240 carries the N6-(pyridoxal phosphate)lysine modification.

This sequence belongs to the SHMT family. In terms of assembly, homodimer. The cofactor is pyridoxal 5'-phosphate.

It is found in the cytoplasm. It carries out the reaction (6R)-5,10-methylene-5,6,7,8-tetrahydrofolate + glycine + H2O = (6S)-5,6,7,8-tetrahydrofolate + L-serine. The protein operates within one-carbon metabolism; tetrahydrofolate interconversion. Its pathway is amino-acid biosynthesis; glycine biosynthesis; glycine from L-serine: step 1/1. Its function is as follows. Catalyzes the reversible interconversion of serine and glycine with tetrahydrofolate (THF) serving as the one-carbon carrier. This reaction serves as the major source of one-carbon groups required for the biosynthesis of purines, thymidylate, methionine, and other important biomolecules. Also exhibits THF-independent aldolase activity toward beta-hydroxyamino acids, producing glycine and aldehydes, via a retro-aldol mechanism. This is Serine hydroxymethyltransferase from Bifidobacterium adolescentis (strain ATCC 15703 / DSM 20083 / NCTC 11814 / E194a).